The following is a 431-amino-acid chain: Protein SHQ1 homolog (431 aa).

Belongs to the SHQ1 family.

Its function is as follows. Required for the quantitative accumulation of H/ACA ribonucleoproteins (RNPs). This chain is Protein SHQ1 homolog, found in Caenorhabditis elegans.